Reading from the N-terminus, the 267-residue chain is Placental prolactin-related protein 2 (267 aa).

N-linked (GlcNAc...) asparagine glycans are attached at residues Asn99 and Asn121. Disulfide bonds link Cys126-Cys244 and Cys261-Cys267.

It belongs to the somatotropin/prolactin family.

Its subcellular location is the secreted. Functionally, placental prolactin-related proteins may play a specific role during gestation. The sequence is that of Placental prolactin-related protein 2 (PRP2) from Bos taurus (Bovine).